The primary structure comprises 260 residues: Global transcriptional regulator CodY (260 aa).

Positions 1–159 are GAF domain; sequence MPNLLEKTRK…SSTVVGIQLL (159 aa). A DNA-binding region (H-T-H motif) is located at residues 207–226; sequence ASVIADRIGITRSVIVNALR.

The protein belongs to the CodY family.

It localises to the cytoplasm. DNA-binding global transcriptional regulator which is involved in the adaptive response to starvation and acts by directly or indirectly controlling the expression of numerous genes in response to nutrient availability. During rapid exponential growth, CodY is highly active and represses genes whose products allow adaptation to nutrient depletion. This chain is Global transcriptional regulator CodY, found in Streptococcus equi subsp. zooepidemicus (strain H70).